We begin with the raw amino-acid sequence, 727 residues long: NADH-ubiquinone oxidoreductase 75 kDa subunit, mitochondrial (727 aa).

The N-terminal 23 residues, Met-1–Thr-23, are a transit peptide targeting the mitochondrion. Residues Asn-30–Lys-108 form the 2Fe-2S ferredoxin-type domain. [2Fe-2S] cluster is bound by residues Cys-64, Cys-75, and Cys-78. Residue Lys-84 is modified to N6-acetyllysine. [2Fe-2S] cluster is bound at residue Cys-92. Residues Lys-108–Gly-147 enclose the 4Fe-4S His(Cys)3-ligated-type domain. His-124, Cys-128, Cys-131, Cys-137, Cys-176, Cys-179, Cys-182, and Cys-226 together coordinate [4Fe-4S] cluster. Positions Thr-245–Arg-301 constitute a 4Fe-4S Mo/W bis-MGD-type domain. An N6-acetyllysine mark is found at Lys-467, Lys-499, and Lys-709.

The protein belongs to the complex I 75 kDa subunit family. Core subunit of respiratory chain NADH dehydrogenase (Complex I) which is composed of 45 different subunits. This is the largest subunit of complex I and it is a component of the iron-sulfur (IP) fragment of the enzyme. Complex I associates with ubiquinol-cytochrome reductase complex (Complex III) to form supercomplexes. Interacts with MDM2 and AKAP1. [2Fe-2S] cluster is required as a cofactor. [4Fe-4S] cluster serves as cofactor.

The protein resides in the mitochondrion inner membrane. It catalyses the reaction a ubiquinone + NADH + 5 H(+)(in) = a ubiquinol + NAD(+) + 4 H(+)(out). Functionally, core subunit of the mitochondrial membrane respiratory chain NADH dehydrogenase (Complex I) which catalyzes electron transfer from NADH through the respiratory chain, using ubiquinone as an electron acceptor. Essential for catalysing the entry and efficient transfer of electrons within complex I. Plays a key role in the assembly and stability of complex I and participates in the association of complex I with ubiquinol-cytochrome reductase complex (Complex III) to form supercomplexes. The protein is NADH-ubiquinone oxidoreductase 75 kDa subunit, mitochondrial (NDUFS1) of Gorilla gorilla gorilla (Western lowland gorilla).